The chain runs to 1108 residues: Retinal guanylyl cyclase 1 (1108 aa).

The N-terminal stretch at 1-54 (MSAWLLPAGGFPGAGFCIPAWQSRSSLSRVLRWPGPGLPGLLLLLLLPSPSAFS) is a signal peptide. The Extracellular portion of the chain corresponds to 55-465 (AVFKVGVLGP…PDVICNGGVE (411 aa)). A disulfide bridge connects residues Cys108 and Cys136. Residue Asn300 is glycosylated (N-linked (GlcNAc...) asparagine). A helical transmembrane segment spans residues 466–490 (PGLVFVGFLLVIVVGLTGAFLAHYL). The Cytoplasmic segment spans residues 491 to 1108 (RHRLLHMQMV…KARPGQFTGK (618 aa)). A disordered region spans residues 520–552 (GGSSRKVAQGSRSSLATRSTSDIRSVPSQPQES). In terms of domain architecture, Protein kinase spans 520–811 (GGSSRKVAQG…DLTFDLFKGI (292 aa)). Residues 529–552 (GSRSSLATRSTSDIRSVPSQPQES) are compositionally biased toward polar residues. The Guanylate cyclase domain occupies 883 to 1013 (TLYFSDIVGF…DTVNTASRME (131 aa)). Residues 1069 to 1108 (IPKPPDLQPGASNHGISLQEIPPERRKKLEKARPGQFTGK) are disordered.

It belongs to the adenylyl cyclase class-4/guanylyl cyclase family. Homodimer; requires homodimerization for guanylyl cyclase activity. Interacts (via C-terminus) with RD3 (via C-terminus); promotes the exit of GUCY2E from the endoplasmic reticulum and its trafficking to the photoreceptor outer segments. Interaction with RD3 negatively regulates GUCY2E guanylate cyclase activity. Post-translationally, there are 9 conserved cysteine residues in sensory guanylate cyclases, 6 in the extracellular domain, which may be involved in intra- or interchain disulfide bonds. As to expression, expressed in retina and enriched in photoreceptor outer segments.

The protein localises to the membrane. Its subcellular location is the photoreceptor outer segment membrane. It is found in the endoplasmic reticulum membrane. It catalyses the reaction GTP = 3',5'-cyclic GMP + diphosphate. With respect to regulation, activated by GUCA1A when free calcium ions concentration is low, and inhibited by GUCA1A when free calcium ions concentration is high. Negatively regulated by RD3; inhibits the basal and GUCA1A-stimulated guanylate cyclase activity. Its function is as follows. Catalyzes the synthesis of cyclic GMP (cGMP) in rods and cones of photoreceptors. Plays an essential role in phototransduction, by mediating cGMP replenishment. May also participate in the trafficking of membrane-asociated proteins to the photoreceptor outer segment membrane. In Rattus norvegicus (Rat), this protein is Retinal guanylyl cyclase 1 (Gucy2e).